Consider the following 327-residue polypeptide: Thiamine thiazole synthase (327 aa).

Substrate contacts are provided by residues C86, 107 to 108 (EA), G115, and V182. Position 216 is a 2,3-didehydroalanine (Cys) (C216). Residues D218, H233, M285, and 295 to 297 (RMG) each bind substrate.

It belongs to the THI4 family. Homooctamer. Fe cation is required as a cofactor. During the catalytic reaction, a sulfide is transferred from Cys-216 to a reaction intermediate, generating a dehydroalanine residue.

It is found in the cytoplasm. It localises to the nucleus. It catalyses the reaction [ADP-thiazole synthase]-L-cysteine + glycine + NAD(+) = [ADP-thiazole synthase]-dehydroalanine + ADP-5-ethyl-4-methylthiazole-2-carboxylate + nicotinamide + 3 H2O + 2 H(+). Involved in biosynthesis of the thiamine precursor thiazole. Catalyzes the conversion of NAD and glycine to adenosine diphosphate 5-(2-hydroxyethyl)-4-methylthiazole-2-carboxylic acid (ADT), an adenylated thiazole intermediate. The reaction includes an iron-dependent sulfide transfer from a conserved cysteine residue of the protein to a thiazole intermediate. The enzyme can only undergo a single turnover, which suggests it is a suicide enzyme. May have additional roles in adaptation to various stress conditions and in DNA damage tolerance. This Aspergillus oryzae (strain ATCC 42149 / RIB 40) (Yellow koji mold) protein is Thiamine thiazole synthase.